A 59-amino-acid polypeptide reads, in one-letter code: uncharacterized protein (59 aa).

It is found in the mitochondrion. This is an uncharacterized protein from Ascobolus immersus.